A 164-amino-acid polypeptide reads, in one-letter code: Transcriptional regulator MraZ (164 aa).

2 consecutive SpoVT-AbrB domains span residues 7-57 and 86-129; these read THQN…TVGA and AYPL…NPEA. Residues 133 to 164 form a disordered region; the sequence is RRQAARSRARTLATSRRPASAPAAGNTAGAAE. Low complexity predominate over residues 142–164; it reads RTLATSRRPASAPAAGNTAGAAE.

It belongs to the MraZ family. As to quaternary structure, forms oligomers.

The protein resides in the cytoplasm. It is found in the nucleoid. The sequence is that of Transcriptional regulator MraZ from Gluconobacter oxydans (strain 621H) (Gluconobacter suboxydans).